Here is a 78-residue protein sequence, read N- to C-terminus: Colicin-V immunity protein (78 aa).

This protein is able to protect a cell, which harbors the plasmid ColV encoding colicin V, against colicin V. The chain is Colicin-V immunity protein (cvi) from Escherichia coli.